The chain runs to 190 residues: Pyridoxal 5'-phosphate synthase subunit PdxT (190 aa).

L-glutamine is bound at residue 46-48 (GES). Residue cysteine 78 is the Nucleophile of the active site. Residues arginine 106 and 135-136 (IR) each bind L-glutamine. Residues histidine 171 and glutamate 173 each act as charge relay system in the active site.

It belongs to the glutaminase PdxT/SNO family. As to quaternary structure, in the presence of PdxS, forms a dodecamer of heterodimers. Only shows activity in the heterodimer.

It catalyses the reaction aldehydo-D-ribose 5-phosphate + D-glyceraldehyde 3-phosphate + L-glutamine = pyridoxal 5'-phosphate + L-glutamate + phosphate + 3 H2O + H(+). The enzyme catalyses L-glutamine + H2O = L-glutamate + NH4(+). Its pathway is cofactor biosynthesis; pyridoxal 5'-phosphate biosynthesis. Catalyzes the hydrolysis of glutamine to glutamate and ammonia as part of the biosynthesis of pyridoxal 5'-phosphate. The resulting ammonia molecule is channeled to the active site of PdxS. This Dictyoglomus turgidum (strain DSM 6724 / Z-1310) protein is Pyridoxal 5'-phosphate synthase subunit PdxT.